We begin with the raw amino-acid sequence, 305 residues long: Tyrosine recombinase XerC (305 aa).

A Core-binding (CB) domain is found at 1-93; sequence MVLDGFAAHF…SWRQYCVWLV (93 aa). Positions 114 to 294 constitute a Tyr recombinase domain; the sequence is RVPKALPQEW…DFDHIARLYD (181 aa). Residues arginine 155, lysine 179, histidine 246, arginine 249, and histidine 272 contribute to the active site. Tyrosine 281 (O-(3'-phospho-DNA)-tyrosine intermediate) is an active-site residue.

It belongs to the 'phage' integrase family. XerC subfamily. Forms a cyclic heterotetrameric complex composed of two molecules of XerC and two molecules of XerD.

The protein resides in the cytoplasm. Site-specific tyrosine recombinase, which acts by catalyzing the cutting and rejoining of the recombining DNA molecules. The XerC-XerD complex is essential to convert dimers of the bacterial chromosome into monomers to permit their segregation at cell division. It also contributes to the segregational stability of plasmids. The chain is Tyrosine recombinase XerC from Neisseria meningitidis serogroup C / serotype 2a (strain ATCC 700532 / DSM 15464 / FAM18).